The following is an 801-amino-acid chain: Ribosome biogenesis protein ERB1 (801 aa).

2 disordered regions span residues 1–135 (MGSK…LEDR) and 358–377 (PEYL…DPED). Residues 35–90 (SEDEEDYIPSSEVDEDDDDDADESASEDSDDSNDSEDDEVEEDDEALLSDEIPSEG) show a composition bias toward acidic residues. Basic and acidic residues-rich tracts occupy residues 91–113 (ESEK…KEPS), 124–135 (PPRKEDEELEDR), and 362–377 (PTKE…DPED). WD repeat units lie at residues 451–490 (GHEG…QVWS) and 494–534 (NGDE…VTPA). A disordered region spans residues 546 to 570 (GFGHATNGKQQANLPPGKEPPGKWA). WD repeat units follow at residues 586–628 (TVRS…TQIP), 631–669 (KLNG…LVKI), 672–711 (PGAK…RPYK), 715–755 (FHTE…DQLE), and 771–801 (VNKL…RLWM).

It belongs to the WD repeat BOP1/ERB1 family. In terms of assembly, component of the NOP7 complex, composed of ERB1, NOP7 and YTM1. The complex is held together by ERB1, which interacts with NOP7 via its N-terminal domain and with YTM1 via a high-affinity interaction between the seven-bladed beta-propeller domains of the 2 proteins. The NOP7 complex associates with the 66S pre-ribosome.

The protein resides in the nucleus. It localises to the nucleolus. The protein localises to the nucleoplasm. Its function is as follows. Component of the NOP7 complex, which is required for maturation of the 25S and 5.8S ribosomal RNAs and formation of the 60S ribosome. In Chaetomium thermophilum (strain DSM 1495 / CBS 144.50 / IMI 039719) (Thermochaetoides thermophila), this protein is Ribosome biogenesis protein ERB1.